The chain runs to 456 residues: Bifunctional protein GlmU (456 aa).

Positions 1–229 (MSNSAMSVVI…LSEVEGVNNR (229 aa)) are pyrophosphorylase. UDP-N-acetyl-alpha-D-glucosamine-binding positions include 11–14 (LAAG), K25, Q76, 81–82 (GT), 103–105 (YGD), G140, E154, N169, and N227. Position 105 (D105) interacts with Mg(2+). N227 is a Mg(2+) binding site. The linker stretch occupies residues 230-250 (LQLSRLERIYQAEQSEKLLLA). The N-acetyltransferase stretch occupies residues 251-456 (GVMLLDPARF…QGWQRPVKKK (206 aa)). R333 and K351 together coordinate UDP-N-acetyl-alpha-D-glucosamine. Catalysis depends on H363, which acts as the Proton acceptor. Residues Y366 and N377 each contribute to the UDP-N-acetyl-alpha-D-glucosamine site. Residues A380, 386–387 (NY), S405, A423, and R440 contribute to the acetyl-CoA site.

In the N-terminal section; belongs to the N-acetylglucosamine-1-phosphate uridyltransferase family. This sequence in the C-terminal section; belongs to the transferase hexapeptide repeat family. Homotrimer. It depends on Mg(2+) as a cofactor.

It is found in the cytoplasm. The enzyme catalyses alpha-D-glucosamine 1-phosphate + acetyl-CoA = N-acetyl-alpha-D-glucosamine 1-phosphate + CoA + H(+). The catalysed reaction is N-acetyl-alpha-D-glucosamine 1-phosphate + UTP + H(+) = UDP-N-acetyl-alpha-D-glucosamine + diphosphate. Its pathway is nucleotide-sugar biosynthesis; UDP-N-acetyl-alpha-D-glucosamine biosynthesis; N-acetyl-alpha-D-glucosamine 1-phosphate from alpha-D-glucosamine 6-phosphate (route II): step 2/2. The protein operates within nucleotide-sugar biosynthesis; UDP-N-acetyl-alpha-D-glucosamine biosynthesis; UDP-N-acetyl-alpha-D-glucosamine from N-acetyl-alpha-D-glucosamine 1-phosphate: step 1/1. It participates in bacterial outer membrane biogenesis; LPS lipid A biosynthesis. Its function is as follows. Catalyzes the last two sequential reactions in the de novo biosynthetic pathway for UDP-N-acetylglucosamine (UDP-GlcNAc). The C-terminal domain catalyzes the transfer of acetyl group from acetyl coenzyme A to glucosamine-1-phosphate (GlcN-1-P) to produce N-acetylglucosamine-1-phosphate (GlcNAc-1-P), which is converted into UDP-GlcNAc by the transfer of uridine 5-monophosphate (from uridine 5-triphosphate), a reaction catalyzed by the N-terminal domain. This chain is Bifunctional protein GlmU, found in Serratia proteamaculans (strain 568).